Here is a 109-residue protein sequence, read N- to C-terminus: Large ribosomal subunit protein uL22 (109 aa).

Belongs to the universal ribosomal protein uL22 family. Part of the 50S ribosomal subunit.

Its function is as follows. This protein binds specifically to 23S rRNA; its binding is stimulated by other ribosomal proteins, e.g. L4, L17, and L20. It is important during the early stages of 50S assembly. It makes multiple contacts with different domains of the 23S rRNA in the assembled 50S subunit and ribosome. Functionally, the globular domain of the protein is located near the polypeptide exit tunnel on the outside of the subunit, while an extended beta-hairpin is found that lines the wall of the exit tunnel in the center of the 70S ribosome. This chain is Large ribosomal subunit protein uL22, found in Dehalococcoides mccartyi (strain ATCC BAA-2100 / JCM 16839 / KCTC 5957 / BAV1).